Here is a 613-residue protein sequence, read N- to C-terminus: Arginine--tRNA ligase (613 aa).

Residues 123–133 carry the 'HIGH' region motif; the sequence is PNVAKPMHVGH.

It belongs to the class-I aminoacyl-tRNA synthetase family. Monomer.

It is found in the cytoplasm. The enzyme catalyses tRNA(Arg) + L-arginine + ATP = L-arginyl-tRNA(Arg) + AMP + diphosphate. The sequence is that of Arginine--tRNA ligase from Caulobacter sp. (strain K31).